The chain runs to 107 residues: Homeobox protein HD-7 (107 aa).

Positions Lys21–Asn80 form a DNA-binding region, homeobox.

It is found in the nucleus. This is Homeobox protein HD-7 (HD-7) from Encephalitozoon cuniculi (strain GB-M1) (Microsporidian parasite).